Consider the following 175-residue polypeptide: Ribosome maturation factor RimM (175 aa).

Residues 96-172 (PDTYYDHQLE…LIEIDPPDGL (77 aa)) enclose the PRC barrel domain.

Belongs to the RimM family. Binds ribosomal protein uS19.

Its subcellular location is the cytoplasm. Functionally, an accessory protein needed during the final step in the assembly of 30S ribosomal subunit, possibly for assembly of the head region. Essential for efficient processing of 16S rRNA. May be needed both before and after RbfA during the maturation of 16S rRNA. It has affinity for free ribosomal 30S subunits but not for 70S ribosomes. The protein is Ribosome maturation factor RimM of Mycolicibacterium paratuberculosis (strain ATCC BAA-968 / K-10) (Mycobacterium paratuberculosis).